The sequence spans 134 residues: Fluoride-specific ion channel FluC (134 aa).

A run of 4 helical transmembrane segments spans residues 7 to 27, 38 to 58, 69 to 89, and 110 to 130; these read LAVA…TIMA, GTLL…IVLV, LFLF…AAES, and VGSL…LLGH. The Na(+) site is built by Gly77 and Thr80.

Belongs to the fluoride channel Fluc/FEX (TC 1.A.43) family.

It localises to the cell inner membrane. The catalysed reaction is fluoride(in) = fluoride(out). Its activity is regulated as follows. Na(+) is not transported, but it plays an essential structural role and its presence is essential for fluoride channel function. Functionally, fluoride-specific ion channel. Important for reducing fluoride concentration in the cell, thus reducing its toxicity. This is Fluoride-specific ion channel FluC from Legionella pneumophila subsp. pneumophila (strain Philadelphia 1 / ATCC 33152 / DSM 7513).